The sequence spans 197 residues: Adenylyl-sulfate kinase (197 aa).

33-40 (GLSGSGKS) contacts ATP. Residue Ser107 is the Phosphoserine intermediate of the active site.

The protein belongs to the APS kinase family.

The catalysed reaction is adenosine 5'-phosphosulfate + ATP = 3'-phosphoadenylyl sulfate + ADP + H(+). Its pathway is sulfur metabolism; hydrogen sulfide biosynthesis; sulfite from sulfate: step 2/3. Functionally, catalyzes the synthesis of activated sulfate. In Bacillus pumilus (strain SAFR-032), this protein is Adenylyl-sulfate kinase.